A 274-amino-acid polypeptide reads, in one-letter code: Small ribosomal subunit protein uS3 (274 aa).

Residues 38–106 enclose the KH type-2 domain; the sequence is IRRLLSSGLE…QVQLNILEVK (69 aa). The disordered stretch occupies residues 215–274; that stretch reads AAAAPAGADRPRRERPSGTRPRRSGASGTTATGTDAGRAAGGEEAAPDAAAPVEAQSTES. Positions 238–266 are enriched in low complexity; that stretch reads SGASGTTATGTDAGRAAGGEEAAPDAAAP.

This sequence belongs to the universal ribosomal protein uS3 family. As to quaternary structure, part of the 30S ribosomal subunit. Forms a tight complex with proteins S10 and S14.

Its function is as follows. Binds the lower part of the 30S subunit head. Binds mRNA in the 70S ribosome, positioning it for translation. This is Small ribosomal subunit protein uS3 from Mycobacterium tuberculosis (strain ATCC 25177 / H37Ra).